Reading from the N-terminus, the 295-residue chain is Nucleotide-binding protein EF_0766 (295 aa).

ATP is bound at residue 12-19 (GMSGAGKT). 62–65 (DLRS) contacts GTP.

The protein belongs to the RapZ-like family.

Functionally, displays ATPase and GTPase activities. This chain is Nucleotide-binding protein EF_0766, found in Enterococcus faecalis (strain ATCC 700802 / V583).